Consider the following 379-residue polypeptide: Cytochrome b (379 aa).

The next 4 helical transmembrane spans lie at 33–53, 77–98, 113–133, and 178–198; these read FGSL…FLAM, WLIR…YIHI, WNIG…GYVL, and FFAF…VHLL. 2 residues coordinate heme b: His83 and His97. Heme b is bound by residues His182 and His196. His201 serves as a coordination point for a ubiquinone. 4 helical membrane-spanning segments follow: residues 226–246, 288–308, 320–340, and 347–367; these read TKDF…VLYF, LGGV…PYIH, ISQF…WIGG, and FIII…IXMX.

The protein belongs to the cytochrome b family. In terms of assembly, the cytochrome bc1 complex contains 11 subunits: 3 respiratory subunits (MT-CYB, CYC1 and UQCRFS1), 2 core proteins (UQCRC1 and UQCRC2) and 6 low-molecular weight proteins (UQCRH/QCR6, UQCRB/QCR7, UQCRQ/QCR8, UQCR10/QCR9, UQCR11/QCR10 and a cleavage product of UQCRFS1). This cytochrome bc1 complex then forms a dimer. Heme b serves as cofactor.

It is found in the mitochondrion inner membrane. In terms of biological role, component of the ubiquinol-cytochrome c reductase complex (complex III or cytochrome b-c1 complex) that is part of the mitochondrial respiratory chain. The b-c1 complex mediates electron transfer from ubiquinol to cytochrome c. Contributes to the generation of a proton gradient across the mitochondrial membrane that is then used for ATP synthesis. The polypeptide is Cytochrome b (MT-CYB) (Thomomys umbrinus (Southern pocket gopher)).